The sequence spans 358 residues: Putative glycylpeptide N-tetradecanoyltransferase (358 aa).

Belongs to the NMT family.

It catalyses the reaction N-terminal glycyl-[protein] + tetradecanoyl-CoA = N-tetradecanoylglycyl-[protein] + CoA + H(+). Functionally, adds a myristoyl group to the N-terminal glycine residue of certain proteins. In Acanthamoeba polyphaga (Amoeba), this protein is Putative glycylpeptide N-tetradecanoyltransferase.